The chain runs to 402 residues: Multidrug resistance protein MdtH (402 aa).

Residues 1–12 (MSRVSQARNLGK) are Cytoplasmic-facing. Residues 13 to 33 (YFLLIDNMLVVLGFFVVFPLI) form a helical membrane-spanning segment. Topologically, residues 34 to 98 (SIRFVDQMGW…GFATMGIAHE (65 aa)) are periplasmic. The helical transmembrane segment at 99–116 (PWLLWFSCFLSGLGGTLF) threads the bilayer. The Cytoplasmic portion of the chain corresponds to 117–138 (DPPRSALVVKLIRPEQRGRFFS). A helical transmembrane segment spans residues 139–159 (LLMMQDSAGAVIGALLGSWLL). At 160–164 (QYDFR) the chain is on the periplasmic side. Residues 165–185 (LVCATGAILFILCALFNAWLL) traverse the membrane as a helical segment. Topologically, residues 186-213 (PAWKLSTVRTPVREGMRRVMSDKRFVTY) are cytoplasmic. A helical transmembrane segment spans residues 214-234 (VLTLAGYYMLAVQVMLMLPIM). The Periplasmic segment spans residues 235-243 (VNDIAGSPA). A helical transmembrane segment spans residues 244 to 264 (AVKWMYAIEACLSLTLLYPIA). Over 265-276 (RWSEKRFRLEHR) the chain is Cytoplasmic. The chain crosses the membrane as a helical span at residues 277–297 (LMAGLLVMSLSMLPIGMVGNL). At 298–299 (QQ) the chain is on the periplasmic side. A helical transmembrane segment spans residues 300 to 320 (LFTLICAFYIGSVIAEPARET). Residues 321-339 (LSASLADARARGSYMGFSR) are Cytoplasmic-facing. Residues 340-360 (LGLAIGGAIGYIGGGWLFDMG) traverse the membrane as a helical segment. Over 361 to 367 (KALAQPE) the chain is Periplasmic. Residues 368–388 (LPWMMLGIIGFITFLALGWQF) traverse the membrane as a helical segment. Residues 389–402 (SHKRTPRRMLEPGA) are Cytoplasmic-facing.

The protein belongs to the major facilitator superfamily. DHA1 family. MdtH (TC 2.A.1.2.21) subfamily.

It is found in the cell inner membrane. This Salmonella agona (strain SL483) protein is Multidrug resistance protein MdtH.